Here is a 314-residue protein sequence, read N- to C-terminus: MPLNLPRHLPAIEILKRESIFVMDDLRASAQDIRPLKIVLLNLMPVKIATETDFVRLLSDSPLQVNVVFVKMKEHQSKNTSLEHLMAFYKNFEDICEENYDGMIITGAPLELMNFEEVTYWEELQKIFDWASKHVTSTLYICWAAQAGLYHFYGIPKYSLAKKMFGVFQHTTNGSNVPLFRGFDSEFYVPHSRYTEIRKEDILKVPRLKLLVESKESGVHIVSARCGREIFMTGHAEYAPNTLHNEYQRDLDKGIQTEIPKNYYKDNDSTKDVLVSWVAHANLLFKNWLNYYVYQATPYDPKEIEFLEDLNVKE.

Residue C142 is the Acyl-thioester intermediate of the active site. Substrate-binding residues include K163 and S192. H235 (proton acceptor) is an active-site residue. The active site involves E237. R249 lines the substrate pocket.

Belongs to the MetA family.

The protein localises to the cytoplasm. The enzyme catalyses L-homoserine + acetyl-CoA = O-acetyl-L-homoserine + CoA. It functions in the pathway amino-acid biosynthesis; L-methionine biosynthesis via de novo pathway; O-acetyl-L-homoserine from L-homoserine: step 1/1. In terms of biological role, transfers an acetyl group from acetyl-CoA to L-homoserine, forming acetyl-L-homoserine. This is Homoserine O-acetyltransferase from Azobacteroides pseudotrichonymphae genomovar. CFP2.